The chain runs to 564 residues: uncharacterized protein (564 aa).

8 helical membrane-spanning segments follow: residues 12–32 (TYYL…LFIL), 97–119 (MTAY…YVLL), 139–161 (AFAL…LALW), 188–208 (FVLG…YDAI), 213–233 (WNLM…FVEY), 277–297 (MTVH…ALLF), 306–326 (NVYL…AFWF), and 348–368 (FHFL…YLIW).

The protein localises to the cell membrane. This is an uncharacterized protein from Bacillus subtilis (strain 168).